Reading from the N-terminus, the 258-residue chain is 6-carboxyhexanoate--CoA ligase (258 aa).

Belongs to the BioW family. In terms of assembly, homodimer. Requires Mg(2+) as cofactor.

It catalyses the reaction heptanedioate + ATP + CoA = 6-carboxyhexanoyl-CoA + AMP + diphosphate. Its pathway is metabolic intermediate metabolism; pimeloyl-CoA biosynthesis; pimeloyl-CoA from pimelate: step 1/1. Catalyzes the transformation of pimelate into pimeloyl-CoA with concomitant hydrolysis of ATP to AMP. This chain is 6-carboxyhexanoate--CoA ligase, found in Bacillus atrophaeus (strain 1942).